The following is a 224-amino-acid chain: tRNA (guanine-N(7)-)-methyltransferase (224 aa).

Positions 54, 79, 106, and 129 each coordinate S-adenosyl-L-methionine. The active site involves Asp129. Residues Lys133 and Asp165 each coordinate substrate.

This sequence belongs to the class I-like SAM-binding methyltransferase superfamily. TrmB family.

The enzyme catalyses guanosine(46) in tRNA + S-adenosyl-L-methionine = N(7)-methylguanosine(46) in tRNA + S-adenosyl-L-homocysteine. It functions in the pathway tRNA modification; N(7)-methylguanine-tRNA biosynthesis. Catalyzes the formation of N(7)-methylguanine at position 46 (m7G46) in tRNA. The sequence is that of tRNA (guanine-N(7)-)-methyltransferase from Chlamydia muridarum (strain MoPn / Nigg).